A 247-amino-acid polypeptide reads, in one-letter code: LHFPL tetraspan subfamily member 4 protein (247 aa).

4 consecutive transmembrane segments (helical) span residues 22–42, 97–117, 127–147, and 178–198; these read IGVLWAIFTICFAIINVVVFI, FFVLLSMVLILGCITCFALFF, ICAWMQLLAALCLVLGCMIFP, and ILAIIGILNALILSFLAFVLG.

The protein belongs to the LHFP family. Interacts with GABA(A) receptor subunits. Interacts with GABRB3. Interacts with GABRA2. Interacts with GABRG2. Identified in a complex of 720 kDa composed of LHFPL4, NLGN2, GABRA1, GABRB2, GABRG2 and GABRB3. Interacts with GABRA1. Interacts with NLGN2; leading to mutual regulation of protein level and synaptic clustering.

It localises to the cell projection. Its subcellular location is the dendrite. It is found in the postsynaptic cell membrane. Functionally, plays a role in the regulation of inhibitory synapse formation and function by being involved in maintening gamma-aminobutyric acid receptors (GABAARs) clustering and their associated scaffold proteins at inhibitory synaptic sites. Acts in concert with NLGN2 to recruit or stabilize GABAARs. This Bos taurus (Bovine) protein is LHFPL tetraspan subfamily member 4 protein.